The primary structure comprises 50 residues: Large ribosomal subunit protein eL39 (50 aa).

It belongs to the eukaryotic ribosomal protein eL39 family.

This chain is Large ribosomal subunit protein eL39, found in Methanosphaerula palustris (strain ATCC BAA-1556 / DSM 19958 / E1-9c).